A 353-amino-acid chain; its full sequence is MTIAAGRFTKEENDLFDIMDDWLRRDRFVFVGWSGLLLFPCAYFALGGWFTGTTFVTSWYTHGLASSYLEGCNFLTAAVSTPANSLAHSLLLLWGPEAQGDFTRWCQLGGLWTFVALHGAFGLIGFMLRQFELARSVQLRPYNAIAFSAPIAVFVSVFLIYPLGQSGWFFAPSFGVAAIFRFILFFQGFHNWTLNPFHMMGVAGVLGAALLCAIHGATVENTLFEDGDGANTFRAFNPTQAEETYSMVTANRFWSQIFGVAFSNKRWLHFFMLFVPVTGLWMSALGVVGLALNLRAYDFVSQEIRAAEDPEFETFYTKNILLNEGIRAWMAAQDQPHENLIFPEEVLPRGNAL.

Residue threonine 2 is modified to N-acetylthreonine. The residue at position 2 (threonine 2) is a Phosphothreonine. The chain crosses the membrane as a helical span at residues 41–61; that stretch reads CAYFALGGWFTGTTFVTSWYT. Histidine 118 is a binding site for chlorophyll a. Residues 125–141 traverse the membrane as a helical segment; that stretch reads GFMLRQFELARSVQLRP. Residues glutamine 130 and asparagine 143 each coordinate pheophytin a. The helical transmembrane segment at 153–166 threads the bilayer; the sequence is VFVSVFLIYPLGQS. Histidine 198 provides a ligand contact to chlorophyll a. Residues 208–228 traverse the membrane as a helical segment; that stretch reads AALLCAIHGATVENTLFEDGD. A plastoquinone contacts are provided by histidine 215 and phenylalanine 262. A Fe cation-binding site is contributed by histidine 215. Fe cation is bound at residue histidine 269. The helical transmembrane segment at 279 to 295 threads the bilayer; sequence GLWMSALGVVGLALNLR.

It belongs to the reaction center PufL/M/PsbA/D family. As to quaternary structure, PSII is composed of 1 copy each of membrane proteins PsbA, PsbB, PsbC, PsbD, PsbE, PsbF, PsbH, PsbI, PsbJ, PsbK, PsbL, PsbM, PsbT, PsbX, PsbY, PsbZ, Psb30/Ycf12, at least 3 peripheral proteins of the oxygen-evolving complex and a large number of cofactors. It forms dimeric complexes. The D1/D2 heterodimer binds P680, chlorophylls that are the primary electron donor of PSII, and subsequent electron acceptors. It shares a non-heme iron and each subunit binds pheophytin, quinone, additional chlorophylls, carotenoids and lipids. There is also a Cl(-1) ion associated with D1 and D2, which is required for oxygen evolution. The PSII complex binds additional chlorophylls, carotenoids and specific lipids. serves as cofactor.

The protein localises to the plastid. Its subcellular location is the chloroplast thylakoid membrane. The enzyme catalyses 2 a plastoquinone + 4 hnu + 2 H2O = 2 a plastoquinol + O2. In terms of biological role, photosystem II (PSII) is a light-driven water:plastoquinone oxidoreductase that uses light energy to abstract electrons from H(2)O, generating O(2) and a proton gradient subsequently used for ATP formation. It consists of a core antenna complex that captures photons, and an electron transfer chain that converts photonic excitation into a charge separation. The D1/D2 (PsbA/PsbD) reaction center heterodimer binds P680, the primary electron donor of PSII as well as several subsequent electron acceptors. D2 is needed for assembly of a stable PSII complex. The polypeptide is Photosystem II D2 protein (Dioscorea elephantipes (Elephant's foot yam)).